A 398-amino-acid chain; its full sequence is Carboxyaminopropylagmatine dehydrogenase (398 aa).

It belongs to the saccharopine dehydrogenase family.

It catalyses the reaction N(1)-[(S)-3-amino-3-carboxypropyl]agmatine + NADP(+) + H2O = L-aspartate 4-semialdehyde + agmatine + NADPH + H(+). Its pathway is amine and polyamine biosynthesis; spermidine biosynthesis. Dehydrogenase involved in the biosynthesis of spermidine via the carboxyaminopropylagmatine (CAPA) pathway. Catalyzes the reductive condensation of agmatine and L-aspartate-beta-semialdehyde (ASA) into CAPA. Shows activity toward putrescine and 1,3-diaminopropane, but the catalytic efficiency is three to four orders of magnitude lower than that for agmatine. Cannot use cadaverine or spermidine. This chain is Carboxyaminopropylagmatine dehydrogenase, found in Synechocystis sp. (strain ATCC 27184 / PCC 6803 / Kazusa).